Consider the following 620-residue polypeptide: 1-deoxy-D-xylulose-5-phosphate synthase (620 aa).

Thiamine diphosphate-binding positions include His80 and 121–123; that span reads GHS. Mg(2+) is bound at residue Asp152. Residues 153–154, Asn181, Tyr288, and Glu370 each bind thiamine diphosphate; that span reads GA. Asn181 contributes to the Mg(2+) binding site.

This sequence belongs to the transketolase family. DXPS subfamily. Homodimer. Requires Mg(2+) as cofactor. Thiamine diphosphate is required as a cofactor.

It catalyses the reaction D-glyceraldehyde 3-phosphate + pyruvate + H(+) = 1-deoxy-D-xylulose 5-phosphate + CO2. Its pathway is metabolic intermediate biosynthesis; 1-deoxy-D-xylulose 5-phosphate biosynthesis; 1-deoxy-D-xylulose 5-phosphate from D-glyceraldehyde 3-phosphate and pyruvate: step 1/1. Catalyzes the acyloin condensation reaction between C atoms 2 and 3 of pyruvate and glyceraldehyde 3-phosphate to yield 1-deoxy-D-xylulose-5-phosphate (DXP). This is 1-deoxy-D-xylulose-5-phosphate synthase from Sodalis glossinidius (strain morsitans).